A 750-amino-acid polypeptide reads, in one-letter code: MYGLVVCLFGMIFGLIQYQGINKLPVHAAMKEISDLIYETCKTYLITQGKFIIILWALVAAIIVAYFGGLNHLAPDKVVFILACSLLGIAGSYTVAWFGMRINTFANSRTAFASLGGKPFPTYAIPLRAGMSIGMLLISIELFAMLCILLFIPVDYAGPCFIGFAIGESLGASVLRIAGGIFTKIADIGSDLMKIVFKIKEDDARNPGVIADCTGDNAGDSVGPTADGFETYGVTGVALISFILLAIKDPSIQVSLLVWIFAMRLVMIVASAVSYWVNDALAKMKYGNADEMNFEKPLITLVWLTSIVSIVLTYIASYMLIAQLGDGTMWWKLASIITCGTIAGALIPELVDRFTSTECAFVRNVVQCSKEGGAALNILSGLVAGNFSAYWMGLAIIVLMGAAFGFSTLGLDVMMLAPSVFAFGLVAFGFLSMGPVTIAVDSYGPVTDNAQSVYELSLIETLPNISNSIESEFGFKPDFENAKRYLEANDGAGNTFKATAKPVLIGTAVVGSTTMIFSIIMILTGGLADTGAIAKLSILWPPFLLGLLMGGAVIYWFTGASMNAVTTGAYYAVAFIKKNIKLDGVTKASTEDSKKVVEICTRFAQKGMINLFLTIFFSTLAFACLESYLFIGYLISIALFGLYQAIFMANAGGAWDNAKKVVETELHAKGTELHDASVVGDTVGDPFKDTSSVALNPIIKFTTLFGLLAIELAIKLPTTISVSLAVVFFLLSLVFVHRSFFSMRIAVDKD.

5 consecutive transmembrane segments (helical) span residues 1–21, 51–71, 78–98, 133–153, and 161–181; these read MYGL…YQGI, FIII…GGLN, VVFI…VAWF, IGML…LFIP, and FIGF…AGGI. Lys184 serves as a coordination point for substrate. Mg(2+) is bound by residues Asp187, Asp191, and Asp216. A run of 6 helical transmembrane segments spans residues 227 to 247, 257 to 277, 301 to 321, 327 to 347, 391 to 411, and 420 to 440; these read DGFE…LLAI, LVWI…SYWV, LVWL…YMLI, GTMW…GALI, WMGL…TLGL, and VFAF…TIAV. Asp448 is a binding site for Mg(2+). Helical transmembrane passes span 503-523, 538-558, 607-627, and 629-649; these read VLIG…IMIL, ILWP…YWFT, GMIN…CLES, and LFIG…IFMA. Ca(2+)-binding residues include Asp656, Asp681, and Asp685. Lys688 provides a ligand contact to substrate. The next 2 helical transmembrane spans lie at 694–714 and 716–736; these read ALNP…ELAI and LPTT…LVFV.

The protein belongs to the H(+)-translocating pyrophosphatase (TC 3.A.10) family. K(+)-insensitive subfamily. Homodimer. It depends on Mg(2+) as a cofactor.

It localises to the cell inner membrane. It carries out the reaction diphosphate + H2O + H(+)(in) = 2 phosphate + 2 H(+)(out). Functionally, proton pump that utilizes the energy of pyrophosphate hydrolysis as the driving force for proton movement across the membrane. Generates a proton motive force. The chain is K(+)-insensitive pyrophosphate-energized proton pump from Chlorobaculum tepidum (strain ATCC 49652 / DSM 12025 / NBRC 103806 / TLS) (Chlorobium tepidum).